Here is a 146-residue protein sequence, read N- to C-terminus: Ribosome-binding factor A (146 aa).

Residues 113–146 form a disordered region; it reads IRDEREAQEPAQDPAQDSSQDASVEASDAPDKAE.

Belongs to the RbfA family. In terms of assembly, monomer. Binds 30S ribosomal subunits, but not 50S ribosomal subunits or 70S ribosomes.

It is found in the cytoplasm. Its function is as follows. One of several proteins that assist in the late maturation steps of the functional core of the 30S ribosomal subunit. Associates with free 30S ribosomal subunits (but not with 30S subunits that are part of 70S ribosomes or polysomes). Required for efficient processing of 16S rRNA. May interact with the 5'-terminal helix region of 16S rRNA. The sequence is that of Ribosome-binding factor A from Gemmatimonas aurantiaca (strain DSM 14586 / JCM 11422 / NBRC 100505 / T-27).